The sequence spans 101 residues: Small ribosomal subunit protein uS14 (101 aa).

Belongs to the universal ribosomal protein uS14 family. In terms of assembly, part of the 30S ribosomal subunit. Contacts proteins S3 and S10.

In terms of biological role, binds 16S rRNA, required for the assembly of 30S particles and may also be responsible for determining the conformation of the 16S rRNA at the A site. The protein is Small ribosomal subunit protein uS14 of Escherichia coli O139:H28 (strain E24377A / ETEC).